Reading from the N-terminus, the 251-residue chain is Uridylate kinase (251 aa).

Position 26-29 (26-29 (KLGG)) interacts with ATP. Gly-67 contacts UMP. ATP contacts are provided by Gly-68 and Arg-72. UMP is bound by residues Asp-87 and 148–155 (MGLPYFST). The ATP site is built by Phe-181 and Asp-184.

It belongs to the UMP kinase family. As to quaternary structure, homohexamer.

Its subcellular location is the cytoplasm. The catalysed reaction is UMP + ATP = UDP + ADP. The protein operates within pyrimidine metabolism; CTP biosynthesis via de novo pathway; UDP from UMP (UMPK route): step 1/1. Its activity is regulated as follows. Inhibited by UTP. Its function is as follows. Catalyzes the reversible phosphorylation of UMP to UDP. In Mycolicibacterium vanbaalenii (strain DSM 7251 / JCM 13017 / BCRC 16820 / KCTC 9966 / NRRL B-24157 / PYR-1) (Mycobacterium vanbaalenii), this protein is Uridylate kinase.